A 142-amino-acid chain; its full sequence is Small ribosomal subunit protein uS12 (142 aa).

It belongs to the universal ribosomal protein uS12 family. Part of the 30S ribosomal subunit.

In terms of biological role, with S4 and S5 plays an important role in translational accuracy. Located at the interface of the 30S and 50S subunits. This is Small ribosomal subunit protein uS12 from Methanospirillum hungatei JF-1 (strain ATCC 27890 / DSM 864 / NBRC 100397 / JF-1).